The chain runs to 61 residues: Ferredoxin (61 aa).

The 27-residue stretch at 2–28 (LYITEECTYCGACEPECPTNAISAGSE) folds into the 4Fe-4S ferredoxin-type domain. Cys8, Cys11, Cys14, Cys18, Cys37, Cys40, Cys49, and Cys53 together coordinate [4Fe-4S] cluster.

Requires [4Fe-4S] cluster as cofactor.

Ferredoxins are iron-sulfur proteins that transfer electrons in a wide variety of metabolic reactions. This Chlorobaculum thiosulfatiphilum (Chlorobium limicola f.sp. thiosulfatophilum) protein is Ferredoxin.